The chain runs to 206 residues: Large ribosomal subunit protein uL4 (206 aa).

The protein belongs to the universal ribosomal protein uL4 family. As to quaternary structure, part of the 50S ribosomal subunit.

In terms of biological role, one of the primary rRNA binding proteins, this protein initially binds near the 5'-end of the 23S rRNA. It is important during the early stages of 50S assembly. It makes multiple contacts with different domains of the 23S rRNA in the assembled 50S subunit and ribosome. Forms part of the polypeptide exit tunnel. In Bradyrhizobium sp. (strain BTAi1 / ATCC BAA-1182), this protein is Large ribosomal subunit protein uL4.